Reading from the N-terminus, the 69-residue chain is uncharacterized protein (69 aa).

2 disordered regions span residues 1 to 32 and 44 to 69; these read MSAP…GWGD and QSDA…APSD. Composition is skewed to basic and acidic residues over residues 7–32 and 46–69; these read NLDR…GWGD and DADK…APSD.

This is an uncharacterized protein from Schizosaccharomyces pombe (strain 972 / ATCC 24843) (Fission yeast).